Consider the following 289-residue polypeptide: Phosphate import ATP-binding protein PstB 2 (289 aa).

The ABC transporter domain occupies 37 to 276; the sequence is LHAKVEAFYY…HTPVIFQNPT (240 aa). ATP is bound at residue 69–76; it reads GPSGCGKS.

The protein belongs to the ABC transporter superfamily. Phosphate importer (TC 3.A.1.7) family. The complex is composed of two ATP-binding proteins (PstB), two transmembrane proteins (PstC and PstA) and a solute-binding protein (PstS).

It is found in the cell inner membrane. It carries out the reaction phosphate(out) + ATP + H2O = ADP + 2 phosphate(in) + H(+). Part of the ABC transporter complex PstSACB involved in phosphate import. Responsible for energy coupling to the transport system. This chain is Phosphate import ATP-binding protein PstB 2, found in Trichormus variabilis (strain ATCC 29413 / PCC 7937) (Anabaena variabilis).